The primary structure comprises 600 residues: Elongation factor 4 (600 aa).

One can recognise a tr-type G domain in the interval 4-186 (SKIRNFSIIA…EIVKKIPAPQ (183 aa)). GTP-binding positions include 16-21 (DHGKST) and 133-136 (NKID).

It belongs to the TRAFAC class translation factor GTPase superfamily. Classic translation factor GTPase family. LepA subfamily.

It is found in the cell inner membrane. The catalysed reaction is GTP + H2O = GDP + phosphate + H(+). In terms of biological role, required for accurate and efficient protein synthesis under certain stress conditions. May act as a fidelity factor of the translation reaction, by catalyzing a one-codon backward translocation of tRNAs on improperly translocated ribosomes. Back-translocation proceeds from a post-translocation (POST) complex to a pre-translocation (PRE) complex, thus giving elongation factor G a second chance to translocate the tRNAs correctly. Binds to ribosomes in a GTP-dependent manner. This chain is Elongation factor 4, found in Trichlorobacter lovleyi (strain ATCC BAA-1151 / DSM 17278 / SZ) (Geobacter lovleyi).